Reading from the N-terminus, the 2548-residue chain is Unconventional myosin-IXa (2548 aa).

The region spanning 14–112 (NEHTLRIYPG…YRFLLREKNL (99 aa)) is the Ras-associating domain. In terms of domain architecture, Myosin motor spans 146–1016 (KDFDDLCSLP…ERQHLQDLLH (871 aa)). A helical transmembrane segment spans residues 175–195 (IYTYVGSILIVINPFKFLPIY). 239–246 (GESGSGKT) serves as a coordination point for ATP. Phosphoserine is present on Ser-755. The interval 898–920 (LSKLMETLGQAEPYFVKCIRSNA) is actin-binding. 5 consecutive IQ domains span residues 1021–1041 (RRII…HFLH), 1042–1071 (LRQA…QKDA), 1074–1103 (MASA…AAIV), 1115–1144 (RHMA…KIIL), and 1138–1167 (QRKK…QRLR). The tract at residues 1021–1162 (RRIILLQRWF…RARQRFKALK (142 aa)) is neck or regulatory domain. The tract at residues 1163-2511 (EQRLRETKPE…LKNVKNSPQK (1349 aa)) is tail. Basic and acidic residues predominate over residues 1223–1236 (SVDCLKESPNKQQE). Positions 1223-1250 (SVDCLKESPNKQQERAQSQSGVDLQEDV) are disordered. Phosphoserine is present on residues Ser-1242 and Ser-1258. Residues 1264 to 1291 (QKKVGRAKRESRRMRELEQAIFSLELLK) adopt a coiled-coil conformation. Ser-1299 and Ser-1317 each carry phosphoserine. Residues 1299-1386 (SPSEDRRWST…SNETSSAEHL (88 aa)) form a disordered region. Low complexity-rich tracts occupy residues 1324-1337 (SESS…LSYE) and 1356-1366 (FPSPKISSSPK). The residue at position 1364 (Ser-1364) is a Phosphoserine. A compositionally biased stretch (polar residues) spans 1372–1381 (NALSASNETS). A coiled-coil region spans residues 1486–1532 (VLKKLEKLNTEKEERQKQLQQQNEKEMMEQIRQQTDILEKERKAFKT). The tract at residues 1804 to 1836 (YHPTPPLSPELPGSCRKEFKENKEPSPKAKRKR) is disordered. Positions 1818–1830 (CRKEFKENKEPSP) are enriched in basic and acidic residues. A Phosphoserine modification is found at Ser-1948. 2 consecutive Phorbol-ester/DAG-type zinc fingers follow at residues 1999-2048 (GHIF…TAKC) and 2068-2119 (LTSE…DAES). The Rho-GAP domain occupies 2063–2251 (VELSRLTSED…LIVVEQMNKY (189 aa)). Position 2294 is a phosphoserine (Ser-2294). Residues 2315 to 2358 (AAMETDITEQQQAAMQQEERVLTEQIENLQKEKEELTFEMLVLE) are a coiled coil. Disordered regions lie at residues 2359–2383 (PRAS…ENLN) and 2401–2424 (SSLK…KQQD). Ser-2464 is subject to Phosphoserine. The tract at residues 2490–2531 (RGTFNPEKGKQKLKNVKNSPQKTKETPEGTVMSGRRKTVDPD) is disordered.

This sequence belongs to the TRAFAC class myosin-kinesin ATPase superfamily. Myosin family. In terms of processing, phosphorylated by ALPK1 following monosodium urate monohydrate (MSU)-induced inflammation. As to expression, found to be expressed in testis and placenta and at lower levels in all the examined tissues with the exception of liver. Isoform 5: Found in leukocytes but not in brain, retina or testis.

The protein localises to the membrane. Its subcellular location is the cytoplasm. The protein resides in the synapse. It localises to the cell projection. It is found in the growth cone. Its function is as follows. Myosins are actin-based motor molecules with ATPase activity. Unconventional myosins serve in intracellular movements. Regulates Rho by stimulating it's GTPase activity in neurons. Required for the regulation of neurite branching and motor neuron axon guidance. This chain is Unconventional myosin-IXa (MYO9A), found in Homo sapiens (Human).